The following is a 482-amino-acid chain: tRNA sulfurtransferase (482 aa).

One can recognise a THUMP domain in the interval 61–165; it reads LAIRDALTRI…DDRLLLIKGR (105 aa). ATP is bound by residues 183 to 184, Lys265, Gly287, and Gln296; that span reads LI. The cysteines at positions 344 and 456 are disulfide-linked. Positions 404-482 constitute a Rhodanese domain; sequence FGANDVILDI…GFANVKVYRP (79 aa). Cys456 serves as the catalytic Cysteine persulfide intermediate.

Belongs to the ThiI family.

Its subcellular location is the cytoplasm. It catalyses the reaction [ThiI sulfur-carrier protein]-S-sulfanyl-L-cysteine + a uridine in tRNA + 2 reduced [2Fe-2S]-[ferredoxin] + ATP + H(+) = [ThiI sulfur-carrier protein]-L-cysteine + a 4-thiouridine in tRNA + 2 oxidized [2Fe-2S]-[ferredoxin] + AMP + diphosphate. The catalysed reaction is [ThiS sulfur-carrier protein]-C-terminal Gly-Gly-AMP + S-sulfanyl-L-cysteinyl-[cysteine desulfurase] + AH2 = [ThiS sulfur-carrier protein]-C-terminal-Gly-aminoethanethioate + L-cysteinyl-[cysteine desulfurase] + A + AMP + 2 H(+). It functions in the pathway cofactor biosynthesis; thiamine diphosphate biosynthesis. Catalyzes the ATP-dependent transfer of a sulfur to tRNA to produce 4-thiouridine in position 8 of tRNAs, which functions as a near-UV photosensor. Also catalyzes the transfer of sulfur to the sulfur carrier protein ThiS, forming ThiS-thiocarboxylate. This is a step in the synthesis of thiazole, in the thiamine biosynthesis pathway. The sulfur is donated as persulfide by IscS. This is tRNA sulfurtransferase from Salmonella paratyphi B (strain ATCC BAA-1250 / SPB7).